A 356-amino-acid chain; its full sequence is Probable arabinogalactan endo-beta-1,4-galactanase A (356 aa).

A signal peptide spans 1–21; it reads MLGKTVLLPLLVLLCHSLASA. N-linked (GlcNAc...) asparagine glycosylation occurs at Asn-133. The Proton donor role is filled by Glu-157. Residue Glu-268 is the Nucleophile of the active site.

It belongs to the glycosyl hydrolase 53 family.

The protein localises to the secreted. It carries out the reaction The enzyme specifically hydrolyzes (1-&gt;4)-beta-D-galactosidic linkages in type I arabinogalactans.. Functionally, endogalactanase involved in the degradation of plant cell wall polysaccharides, and more particularly of hairy regions of pectin. The polypeptide is Probable arabinogalactan endo-beta-1,4-galactanase A (galA) (Aspergillus fumigatus (strain ATCC MYA-4609 / CBS 101355 / FGSC A1100 / Af293) (Neosartorya fumigata)).